Here is a 154-residue protein sequence, read N- to C-terminus: Interleukin-7 (154 aa).

Residues 1-25 form the signal peptide; that stretch reads MFHVSFRYIFGIPPLILVLLPVTSS. Disulfide bonds link C27-C145, C58-C133, and C71-C116. N-linked (GlcNAc...) asparagine glycosylation is found at N94 and N115.

Belongs to the IL-7/IL-9 family. Interacts with IL7R and CSF2RG. Post-translationally, three disulfide bonds are present.

The protein localises to the secreted. Hematopoietic cytokine that plays an essential role in the development, expansion, and survival of naive and memory T-cells and B-cells thereby regulating the number of mature lymphocytes and maintaining lymphoid homeostasis. Mechanistically, exerts its biological effects through a receptor composed of IL7RA subunit and the cytokine receptor common subunit gamma/CSF2RG. Binding to the receptor leads to activation of various kinases including JAK1 or JAK3 depending on the cell type and subsequently propagation of signals through activation of several downstream signaling pathways including the PI3K/Akt/mTOR or the JAK-STAT5. The sequence is that of Interleukin-7 (Il7) from Rattus norvegicus (Rat).